Consider the following 330-residue polypeptide: Probable inactive heme oxygenase 2, chloroplastic (330 aa).

Low complexity-rich tracts occupy residues 1 to 13 (MPLAAAVAASAVV) and 56 to 69 (AAEAEAEAVAVDEA). Disordered stretches follow at residues 1–27 (MPLAAAVAASAVVPPRPPPPPPRRARP), 50–82 (PSPPAPAAEAEAEAVAVDEAPPAKPRPRRYPRQ), and 107–156 (TTLK…LEGE). A chloroplast-targeting transit peptide spans 1-47 (MPLAAAVAASAVVPPRPPPPPPRRARPLRSFTGLILTRDLAALTVAR). A compositionally biased stretch (acidic residues) spans 114–151 (TGAEEEVGDGVSEDASASEEEEEEEDDDDVVEEEEEGA).

Belongs to the heme oxygenase family.

The protein resides in the plastid. It localises to the chloroplast. Probable inactive heme oxygenase that may play a role in the regulation of phytochrome assembly and photomorphogenesis. The protein is Probable inactive heme oxygenase 2, chloroplastic (HO2) of Oryza sativa subsp. japonica (Rice).